The primary structure comprises 81 residues: Adenoregulin-related peptide (81 aa).

The N-terminal stretch at 1 to 22 (MAFLKKSLLLVLFLGLVSLSIC) is a signal peptide. The propeptide occupies 23–43 (EEEKRENEDEEEQEDDEQSEM). The tract at residues 24-46 (EEKRENEDEEEQEDDEQSEMKRG) is disordered. A compositionally biased stretch (acidic residues) spans 30–40 (EDEEEQEDDEQ). At I78 the chain carries Isoleucine amide. Residues 79-81 (GEQ) constitute a propeptide that is removed on maturation.

As to expression, expressed by the skin glands.

Its subcellular location is the secreted. Its function is as follows. Has antibacterial activity against Gram-positive bacterium M.luteus NCT C2665 and against Gram-negative bacterium E.coli K12D31. In Agalychnis callidryas (Red-eyed tree frog), this protein is Adenoregulin-related peptide.